A 469-amino-acid polypeptide reads, in one-letter code: MSSNEKRFPEGFLWGGAVAANQVEGAYNEGGKGLSTADVSPNGIMSPFDESMTSLNLYHNGIDFYHRYKEDIALFAEMGFKAFRTSIAWTRIFPNGDEEEPNEEGLRFYDDLFDELLKHHIEPVVTISHYEMPLGLVKNYGGWKNRKVIEFYERYAKTVFKRYQHKVKYWMTFNEINVVLHAPFTGGGLVFEEGENKLNAMYQAAHHQFVASALAVKAGHDIIPDSKIGCMIAATTTYPMTSKPEDVFAAMENERKTLFFSDVQARGAYPGYMKRYLAENNIEIEMAEGDEELLKEHTVDYIGFSYYMSMAASTDPEELAKSGGNLLGGVKNPYLKSSEWGWQIDPKGLRITLNTLYDRYQKPLFIVENGLGAVDKVEEDGTIQDDYRINYLRDHLIEAREAIADGVELIGYTSWGPIDLVSASTAEMKKRYGFIYVDRDNEGNGTFNRIKKKSFNWYQQVIATNGESL.

Residue glutamate 175 is the Proton donor of the active site. Glutamate 368 acts as the Nucleophile in catalysis.

Belongs to the glycosyl hydrolase 1 family.

The enzyme catalyses 6-phospho-beta-D-glucosyl-(1-&gt;4)-D-glucose + H2O = D-glucose 6-phosphate + D-glucose. Functionally, catalyzes the hydrolysis of aryl-phospho-beta-D-glucosides such as 4-methylumbelliferyl-phospho-beta-D-glucopyranoside (MUG-P), phosphoarbutin and phosphosalicin. Plays a major role in the utilization of arbutin or salicin as the sole carbon source. BglA and BglH are the major proteins contributing to hydrolysis of MUG-P by extracts of late-exponential-phase or stationary-phase B.subtilis cells. The sequence is that of Aryl-phospho-beta-D-glucosidase BglH (bglH) from Bacillus subtilis (strain 168).